A 107-amino-acid chain; its full sequence is Universal stress protein B homolog (107 aa).

Transmembrane regions (helical) follow at residues 6–23 (TILF…ARYF) and 89–106 (LFIL…SSFI).

The protein belongs to the universal stress protein B family.

The protein resides in the cell inner membrane. The chain is Universal stress protein B homolog from Vibrio atlanticus (strain LGP32) (Vibrio splendidus (strain Mel32)).